We begin with the raw amino-acid sequence, 249 residues long: Exosome complex component Rrp41 (249 aa).

This sequence belongs to the RNase PH family. Rrp41 subfamily. In terms of assembly, component of the archaeal exosome complex. Forms a hexameric ring-like arrangement composed of 3 Rrp41-Rrp42 heterodimers. The hexameric ring associates with a trimer of Rrp4 and/or Csl4 subunits.

The protein localises to the cytoplasm. In terms of biological role, catalytic component of the exosome, which is a complex involved in RNA degradation. Has 3'-&gt;5' exoribonuclease activity. Can also synthesize heteromeric RNA-tails. This Thermococcus gammatolerans (strain DSM 15229 / JCM 11827 / EJ3) protein is Exosome complex component Rrp41.